We begin with the raw amino-acid sequence, 65 residues long: Large ribosomal subunit protein bL35 (65 aa).

This sequence belongs to the bacterial ribosomal protein bL35 family.

In Prochlorococcus marinus (strain MIT 9301), this protein is Large ribosomal subunit protein bL35.